We begin with the raw amino-acid sequence, 108 residues long: DNA-directed RNA polymerase III subunit RPC10 (108 aa).

Positions 5, 8, 25, 28, 69, and 72 each coordinate Zn(2+). Residues 5–28 form a C4-type zinc finger; sequence CPGCGNGLIVEEGQRCHRFACNTC. Residues 65–107 form a TFIIS-type zinc finger; sequence TAEPCPKCEHPRAYFMQLQTRSADEPMTTFYKCCNAQCGHRWR. The Hairpin motif lies at 88 to 89; it reads DE. Residues C98 and C102 each contribute to the Zn(2+) site.

This sequence belongs to the archaeal RpoM/eukaryotic RPA12/RPB9/RPC11 RNA polymerase family. As to quaternary structure, component of the RNA polymerase III complex consisting of 17 subunits: a ten-subunit horseshoe-shaped catalytic core composed of POLR3A/RPC1, POLR3B/RPC2, POLR1C/RPAC1, POLR1D/RPAC2, POLR3K/RPC10, POLR2E/RPABC1, POLR2F/RPABC2, POLR2H/RPABC3, POLR2K/RPABC4 and POLR2L/RPABC5; a mobile stalk composed of two subunits POLR3H/RPC8 and CRCP/RPC9, protruding from the core and functioning primarily in transcription initiation; and additional subunits homologous to general transcription factors of the RNA polymerase II machinery, POLR3C/RPC3-POLR3F/RPC6-POLR3G/RPC7 heterotrimer required for transcription initiation and POLR3D/RPC4-POLR3E/RPC5 heterodimer involved in both transcription initiation and termination.

The protein resides in the nucleus. Core component of RNA polymerase III (Pol III) which synthesizes small non-coding RNAs using the four ribonucleoside triphosphates as substrates. Can mediate Pol I proofreading of the nascent RNA transcript. Anchors into the Pol III active site to constantly monitor transcription fidelity, cleaves mis-incorporated 5'-ribonucleotides and restarts the transcription process. Once Pol III reaches the poly(dT) termination signal, can induce Pol III clamp opening and transcription termination. Pol III plays an important role in sensing and limiting infection by intracellular bacteria and DNA viruses. Acts as a nuclear and cytosolic DNA sensor involved in innate immune response. Can sense non-self dsDNA that serves as template for transcription into dsRNA. The non-self RNA polymerase III transcripts, such as Epstein-Barr virus-encoded RNAs (EBERs) induce type I interferon and NF-kappa-B through the RIG-I pathway. This is DNA-directed RNA polymerase III subunit RPC10 from Mus musculus (Mouse).